Here is a 280-residue protein sequence, read N- to C-terminus: UPF0276 protein NMB2142 (280 aa).

It belongs to the UPF0276 family.

This chain is UPF0276 protein NMB2142, found in Neisseria meningitidis serogroup B (strain ATCC BAA-335 / MC58).